Here is a 95-residue protein sequence, read N- to C-terminus: PqqA binding protein (95 aa).

This sequence belongs to the PqqD family. In terms of assembly, monomer. Interacts with PqqE.

It functions in the pathway cofactor biosynthesis; pyrroloquinoline quinone biosynthesis. In terms of biological role, functions as a PqqA binding protein and presents PqqA to PqqE, in the pyrroloquinoline quinone (PQQ) biosynthetic pathway. This Rahnella aquatilis protein is PqqA binding protein.